A 223-amino-acid polypeptide reads, in one-letter code: Sigma non-opioid intracellular receptor 1 (223 aa).

The Lumenal portion of the chain corresponds to 1 to 9; sequence MQWAVGRRW. A targeting to endoplasmic reticulum-associated lipid droplets region spans residues 2–8; that stretch reads QWAVGRR. Residues 10 to 30 traverse the membrane as a helical segment; the sequence is AWAALLLAVAAVLTQVVWLWL. Residues 31–223 are Cytoplasmic-facing; the sequence is GTQSFVFQRE…LTTYLFGQDP (193 aa). Residues 99–106 are important for ligand-binding; sequence SLSEYVLL. Residues 177 to 223 are C-terminal hydrophobic region; it reads VIPSTLAFALADTVFSTQDFLTLFYTLRSYARGLRLELTTYLFGQDP.

The protein belongs to the ERG2 family. As to quaternary structure, homotrimer. Forms a ternary complex with ANK2 and ITPR3. The complex is disrupted by agonists. Interacts with KCNA4. Interacts with KCNA2; cocaine consumption leads to increased interaction. Interacts with RNF112 in an oxidative stress-regulated manner. Widely expressed with higher expression in liver, colon, prostate, placenta, small intestine, heart and pancreas. Expressed in the retina by retinal pigment epithelial cells. Expressed in alpha-motor neurons.

The protein localises to the nucleus inner membrane. Its subcellular location is the nucleus outer membrane. It localises to the nucleus envelope. The protein resides in the cytoplasmic vesicle. It is found in the endoplasmic reticulum membrane. The protein localises to the membrane. Its subcellular location is the lipid droplet. It localises to the cell junction. The protein resides in the cell membrane. It is found in the cell projection. The protein localises to the growth cone. Its subcellular location is the postsynaptic density membrane. In terms of biological role, functions in lipid transport from the endoplasmic reticulum and is involved in a wide array of cellular functions probably through regulation of the biogenesis of lipid microdomains at the plasma membrane. Involved in the regulation of different receptors it plays a role in BDNF signaling and EGF signaling. Also regulates ion channels like the potassium channel and could modulate neurotransmitter release. Plays a role in calcium signaling through modulation together with ANK2 of the ITP3R-dependent calcium efflux at the endoplasmic reticulum. Plays a role in several other cell functions including proliferation, survival and death. Originally identified for its ability to bind various psychoactive drugs it is involved in learning processes, memory and mood alteration. Necessary for proper mitochondrial axonal transport in motor neurons, in particular the retrograde movement of mitochondria. Plays a role in protecting cells against oxidative stress-induced cell death via its interaction with RNF112. The protein is Sigma non-opioid intracellular receptor 1 (SIGMAR1) of Homo sapiens (Human).